Here is a 260-residue protein sequence, read N- to C-terminus: Isoprenyl transferase (260 aa).

Asp38 is a catalytic residue. Asp38 provides a ligand contact to Mg(2+). Substrate contacts are provided by residues Gly39–Arg42, Trp43, Arg51, His55, and Ser83–Glu85. Asn86 (proton acceptor) is an active-site residue. Substrate contacts are provided by residues Trp87, Arg89, Arg206, and Arg212–Ser214. Position 225 (Glu225) interacts with Mg(2+).

It belongs to the UPP synthase family. Homodimer. Mg(2+) serves as cofactor.

Its function is as follows. Catalyzes the condensation of isopentenyl diphosphate (IPP) with allylic pyrophosphates generating different type of terpenoids. In Heliobacterium mobile (Heliobacillus mobilis), this protein is Isoprenyl transferase.